The chain runs to 428 residues: F-box/LRR-repeat protein 3 (428 aa).

The segment covering Met-1 to Ser-21 has biased composition (basic and acidic residues). Residues Met-1–Thr-27 are disordered. In terms of domain architecture, F-box spans Cys-34 to Phe-81. 7 LRR repeats span residues Ser-119–Ser-146, Asp-181–Ser-207, Cys-208–Tyr-233, His-234–Val-259, Gly-316–Ala-341, Gly-343–Glu-368, and Cys-369–Glu-394.

As to quaternary structure, part of the SCF (SKP1-CUL1-F-box) E3 ubiquitin-protein ligase complex SCF(FBXL3) composed of CUL1, SKP1, RBX1 and FBXL3. Interacts with CRY1 and CRY2 (phosphorylated). Interacts with HDAC3. Interacts with KDM8. Post-translationally, undergoes autophagy-mediated degradation in the liver in a time-dependent manner. As to expression, widely expressed.

The protein localises to the nucleus. It localises to the cytoplasm. The protein operates within protein modification; protein ubiquitination. Functionally, substrate-recognition component of the SCF(FBXL3) E3 ubiquitin ligase complex involved in circadian rhythm function. Plays a key role in the maintenance of both the speed and the robustness of the circadian clock oscillation. The SCF(FBXL3) complex mainly acts in the nucleus and mediates ubiquitination and subsequent degradation of CRY1 and CRY2. Activity of the SCF(FBXL3) complex is counteracted by the SCF(FBXL21) complex. The polypeptide is F-box/LRR-repeat protein 3 (FBXL3) (Homo sapiens (Human)).